Reading from the N-terminus, the 442-residue chain is uncharacterized protein (442 aa).

The N-terminal stretch at 1-23 (MEILLIVLGAVVAGLLCPVQTAA) is a signal peptide. Disordered stretches follow at residues 36 to 67 (TSIS…NSSD) and 91 to 115 (ANET…TNTR). The span at 48–67 (TSSGELSQSTFSSSSTNSSD) shows a compositional bias: low complexity. 11 N-linked (GlcNAc...) asparagine glycosylation sites follow: Asn64, Asn92, Asn99, Asn130, Asn174, Asn225, Asn244, Asn346, Asn363, Asn386, and Asn398.

The protein resides in the secreted. This is an uncharacterized protein from Arthroderma benhamiae (strain ATCC MYA-4681 / CBS 112371) (Trichophyton mentagrophytes).